The chain runs to 165 residues: Putative defense protein Hdd11 (165 aa).

Residues 1 to 17 form the signal peptide; sequence MWATYVFIAVSLACANG. Residues 18–165 form the Reelin domain; that stretch reads YSSGAPESVC…VESGPVKVIS (148 aa). C27 and C104 are oxidised to a cystine.

This sequence belongs to the insect defense protein family.

The protein localises to the secreted. As this protein is expressed upon bacterial infection, it may have antimicrobial activity. This Hyphantria cunea (Fall webworm moth) protein is Putative defense protein Hdd11.